A 51-amino-acid chain; its full sequence is UPF0181 protein VV2_0310 (51 aa).

The protein belongs to the UPF0181 family.

This chain is UPF0181 protein VV2_0310, found in Vibrio vulnificus (strain CMCP6).